The primary structure comprises 610 residues: UvrABC system protein C (610 aa).

The region spanning 16-94 (SQPGVYRMYD…IKLYQPRYNV (79 aa)) is the GIY-YIG domain. Positions 204–239 (DQVLTQLISRMETASQNLEFEEAARIRDQIQAVRRV) constitute a UVR domain.

This sequence belongs to the UvrC family. Interacts with UvrB in an incision complex.

The protein localises to the cytoplasm. In terms of biological role, the UvrABC repair system catalyzes the recognition and processing of DNA lesions. UvrC both incises the 5' and 3' sides of the lesion. The N-terminal half is responsible for the 3' incision and the C-terminal half is responsible for the 5' incision. The sequence is that of UvrABC system protein C from Escherichia coli (strain SMS-3-5 / SECEC).